A 58-amino-acid polypeptide reads, in one-letter code: MTQLSQSNVERVALVYISVYFFSCISLIVYFFTFCLSVSIPKNRQHPIKIIYNNKCPS.

The chain crosses the membrane as a helical span at residues 12–32 (VALVYISVYFFSCISLIVYFF).

The protein localises to the membrane. This is an uncharacterized protein from Saccharomyces cerevisiae (strain ATCC 204508 / S288c) (Baker's yeast).